The sequence spans 386 residues: MNIHEYQAKEILHKFNVPVPKGFVAMSAEEAETKINQLKSDVLVVKAQIHAGGRGKAGGVKLAKSAEEAQQFVKGMLGITLVTHQTGPNGQQVRRVYIEEGSSIKKEYYLSIVIDPKLSRPAFIFSSEGGMDIEEVAKNFPTKIVKLDIDYAADFASFDSRKLSNIFNLSPEQIEKITNVAKNIYDTFIATDANQIEINPLVETNSGDFIALDAKISFDDNALYRHPEIVELRDYDEEVKEEIEASKHGLSYIKMDGNIGCMVNGAGLAMATMDIIKYYGAEPANFLDVGGGASKETVTEAFKIILSDSNVKGILVNIFGGIMRCDIIASGIVEAAKGMSIKVPLVVRLSGTNFEKGKRILEESGLNIIAADELDEAAQKIVKEVE.

The 236-residue stretch at lysine 9–glutamate 244 folds into the ATP-grasp domain. Residues lysine 46, glycine 53–glycine 55, glutamate 99, serine 102, and glutamate 107 contribute to the ATP site. Positions 199 and 213 each coordinate Mg(2+). Substrate contacts are provided by residues asparagine 264 and glycine 321–methionine 323.

The protein belongs to the succinate/malate CoA ligase beta subunit family. As to quaternary structure, heterotetramer of two alpha and two beta subunits. Requires Mg(2+) as cofactor.

It carries out the reaction succinate + ATP + CoA = succinyl-CoA + ADP + phosphate. It catalyses the reaction GTP + succinate + CoA = succinyl-CoA + GDP + phosphate. It participates in carbohydrate metabolism; tricarboxylic acid cycle; succinate from succinyl-CoA (ligase route): step 1/1. Succinyl-CoA synthetase functions in the citric acid cycle (TCA), coupling the hydrolysis of succinyl-CoA to the synthesis of either ATP or GTP and thus represents the only step of substrate-level phosphorylation in the TCA. The beta subunit provides nucleotide specificity of the enzyme and binds the substrate succinate, while the binding sites for coenzyme A and phosphate are found in the alpha subunit. The chain is Succinate--CoA ligase [ADP-forming] subunit beta from Wolbachia sp. subsp. Brugia malayi (strain TRS).